Reading from the N-terminus, the 1030-residue chain is Teashirt homolog 2 (1030 aa).

Residues 1-120 (MPRRKQQAPK…THPKLPSEPH (120 aa)) form a disordered region. The stretch at 11–42 (RAAGYAQEEVLKEEEEIKEEEEEEEDSGSVAQ) forms a coiled coil. A compositionally biased stretch (acidic residues) spans 21–37 (LKEEEEIKEEEEEEEDS). 2 stretches are compositionally biased toward polar residues: residues 39-49 (SVAQHQSSNDT) and 66-95 (SCQN…QVSD). Positions 103-120 (DVSDKKANTHPKLPSEPH) are enriched in basic and acidic residues. K189 participates in a covalent cross-link: Glycyl lysine isopeptide (Lys-Gly) (interchain with G-Cter in SUMO2). 2 C2H2-type zinc fingers span residues 216 to 240 (FRCR…ETGH) and 276 to 300 (LKCM…KTKH). The tract at residues 240-266 (HYQDDNRKKDKLRPTSYSKPRKRAFQD) is disordered. Residues K307 and K316 each participate in a glycyl lysine isopeptide (Lys-Gly) (interchain with G-Cter in SUMO2) cross-link. The interval 328–348 (VNRPCSPDSTTGSLADSFSSQ) is disordered. The segment covering 334–348 (PDSTTGSLADSFSSQ) has biased composition (polar residues). The segment at 381–405 (LKCMECGSSHDTLQQLTTHMMVTGH) adopts a C2H2-type 3; atypical zinc-finger fold. Residue K418 forms a Glycyl lysine isopeptide (Lys-Gly) (interchain with G-Cter in SUMO2) linkage. Over residues 432 to 459 (SLSETPNSESLAPKPSSNSPSECTASTT) the composition is skewed to polar residues. The tract at residues 432 to 488 (SLSETPNSESLAPKPSSNSPSECTASTTELKKESKKEKGEGIEDEQGVKSEDYEDSL) is disordered. Residues 460 to 482 (ELKKESKKEKGEGIEDEQGVKSE) show a composition bias toward basic and acidic residues. Glycyl lysine isopeptide (Lys-Gly) (interchain with G-Cter in SUMO2) cross-links involve residues K462, K480, K497, and K601. Basic and acidic residues-rich tracts occupy residues 608-623 (DEVV…HEEA) and 633-664 (SFSK…KPEP). Disordered regions lie at residues 608-687 (DEVV…LPSI), 703-726 (KATE…VFHK), and 759-784 (QPID…SPPQ). K652 participates in a covalent cross-link: Glycyl lysine isopeptide (Lys-Gly) (interchain with G-Cter in SUMO2). A compositionally biased stretch (low complexity) spans 710 to 722 (SPSCSSPNSSTSP). Polar residues predominate over residues 773 to 783 (SSQAQSCTSPP). Glycyl lysine isopeptide (Lys-Gly) (interchain with G-Cter in SUMO2) cross-links involve residues K796 and K816. Positions 837-907 (RKGRQSNWNP…NVKYQLRKTG (71 aa)) form a DNA-binding region, homeobox. Residues 922 to 944 (FYCSDCASQFRTPSTYISHLESH) form a C2H2-type 4 zinc finger. A Glycyl lysine isopeptide (Lys-Gly) (interchain with G-Cter in SUMO2) cross-link involves residue K962. Disordered stretches follow at residues 965 to 987 (QEIS…EDTD) and 1009 to 1030 (LSKT…VDEE). A compositionally biased stretch (polar residues) spans 968–977 (SRVSSAQRSP). A Phosphoserine modification is found at S976. The C2H2-type 5 zinc-finger motif lies at 990–1013 (FKCKLCRRTFVSKHAVKLHLSKTH).

The protein belongs to the teashirt C2H2-type zinc-finger protein family. Interacts (via homeobox domain) with APBB1 (via PID domain 1). Sumoylated.

The protein resides in the nucleus. Its function is as follows. Probable transcriptional regulator involved in developmental processes. May act as a transcriptional repressor (Potential). The chain is Teashirt homolog 2 (Tshz2) from Mus musculus (Mouse).